Consider the following 438-residue polypeptide: Putative truncated GMC-type inactive oxidoreductase L894 (438 aa).

The first 26 residues, 1 to 26 (MYVFLLFSRYKIFYVYIKKMAHRSRC), serve as a signal peptide directing secretion. 79 to 109 (DIVIIGAGAAGCVLAYYLTKFSDLKIILLEA) provides a ligand contact to FAD.

It belongs to the GMC oxidoreductase family. It depends on FAD as a cofactor.

The protein localises to the virion. The protein is Putative truncated GMC-type inactive oxidoreductase L894 of Acanthamoeba polyphaga (Amoeba).